Consider the following 422-residue polypeptide: Enolase (422 aa).

Glutamine 162 lines the (2R)-2-phosphoglycerate pocket. The active-site Proton donor is glutamate 204. Mg(2+) is bound by residues aspartate 241, glutamate 284, and aspartate 311. (2R)-2-phosphoglycerate-binding residues include lysine 336, arginine 365, serine 366, and lysine 387. The Proton acceptor role is filled by lysine 336.

It belongs to the enolase family. Component of the RNA degradosome, a multiprotein complex involved in RNA processing and mRNA degradation. Requires Mg(2+) as cofactor.

The protein resides in the cytoplasm. The protein localises to the secreted. It is found in the cell surface. The enzyme catalyses (2R)-2-phosphoglycerate = phosphoenolpyruvate + H2O. It participates in carbohydrate degradation; glycolysis; pyruvate from D-glyceraldehyde 3-phosphate: step 4/5. In terms of biological role, catalyzes the reversible conversion of 2-phosphoglycerate (2-PG) into phosphoenolpyruvate (PEP). It is essential for the degradation of carbohydrates via glycolysis. The chain is Enolase from Legionella pneumophila (strain Corby).